The primary structure comprises 380 residues: Succinyl-diaminopimelate desuccinylase (380 aa).

His-69 is a Zn(2+) binding site. Residue Asp-71 is part of the active site. Residue Asp-102 participates in Zn(2+) binding. Glu-135 acts as the Proton acceptor in catalysis. Positions 136, 164, and 353 each coordinate Zn(2+).

It belongs to the peptidase M20A family. DapE subfamily. In terms of assembly, homodimer. It depends on Zn(2+) as a cofactor. Co(2+) serves as cofactor.

The enzyme catalyses N-succinyl-(2S,6S)-2,6-diaminopimelate + H2O = (2S,6S)-2,6-diaminopimelate + succinate. Its pathway is amino-acid biosynthesis; L-lysine biosynthesis via DAP pathway; LL-2,6-diaminopimelate from (S)-tetrahydrodipicolinate (succinylase route): step 3/3. In terms of biological role, catalyzes the hydrolysis of N-succinyl-L,L-diaminopimelic acid (SDAP), forming succinate and LL-2,6-diaminopimelate (DAP), an intermediate involved in the bacterial biosynthesis of lysine and meso-diaminopimelic acid, an essential component of bacterial cell walls. This Cereibacter sphaeroides (strain KD131 / KCTC 12085) (Rhodobacter sphaeroides) protein is Succinyl-diaminopimelate desuccinylase.